Here is a 580-residue protein sequence, read N- to C-terminus: CTP synthase (580 aa).

Residues 304–559 (NIILVGKYVS…VAASSGCLDE (256 aa)) enclose the Glutamine amidotransferase type-1 domain. Active-site for GATase activity residues include cysteine 403, histidine 532, and glutamate 534.

This sequence belongs to the CTP synthase family.

It catalyses the reaction UTP + L-glutamine + ATP + H2O = CTP + L-glutamate + ADP + phosphate + 2 H(+). Its pathway is pyrimidine metabolism; CTP biosynthesis via de novo pathway; CTP from UDP: step 2/2. Catalyzes the ATP-dependent amination of UTP to CTP with either L-glutamine or ammonia as the source of nitrogen. The chain is CTP synthase (URA7) from Gibberella zeae (strain ATCC MYA-4620 / CBS 123657 / FGSC 9075 / NRRL 31084 / PH-1) (Wheat head blight fungus).